We begin with the raw amino-acid sequence, 464 residues long: D-inositol 3-phosphate glycosyltransferase (464 aa).

Positions methionine 1–valine 20 are enriched in basic and acidic residues. The tract at residues methionine 1–proline 44 is disordered. Histidine 53 provides a ligand contact to 1D-myo-inositol 3-phosphate. UDP-N-acetyl-alpha-D-glucosamine is bound by residues glutamine 59–proline 60 and glycine 67. Residues aspartate 64–asparagine 69, lysine 122, tyrosine 155, threonine 179, and arginine 199 contribute to the 1D-myo-inositol 3-phosphate site. Positions 274, 279, and 340 each coordinate UDP-N-acetyl-alpha-D-glucosamine. Residues phenylalanine 349, arginine 350, and alanine 352 each coordinate Mg(2+). 2 residues coordinate UDP-N-acetyl-alpha-D-glucosamine: glutamate 362 and glutamate 370. Threonine 376 lines the Mg(2+) pocket.

This sequence belongs to the glycosyltransferase group 1 family. MshA subfamily. As to quaternary structure, homodimer.

The catalysed reaction is 1D-myo-inositol 3-phosphate + UDP-N-acetyl-alpha-D-glucosamine = 1D-myo-inositol 2-acetamido-2-deoxy-alpha-D-glucopyranoside 3-phosphate + UDP + H(+). Functionally, catalyzes the transfer of a N-acetyl-glucosamine moiety to 1D-myo-inositol 3-phosphate to produce 1D-myo-inositol 2-acetamido-2-deoxy-glucopyranoside 3-phosphate in the mycothiol biosynthesis pathway. This is D-inositol 3-phosphate glycosyltransferase from Streptomyces avermitilis (strain ATCC 31267 / DSM 46492 / JCM 5070 / NBRC 14893 / NCIMB 12804 / NRRL 8165 / MA-4680).